The primary structure comprises 237 residues: Phosphoribosylaminoimidazole-succinocarboxamide synthase (237 aa).

The protein belongs to the SAICAR synthetase family.

It catalyses the reaction 5-amino-1-(5-phospho-D-ribosyl)imidazole-4-carboxylate + L-aspartate + ATP = (2S)-2-[5-amino-1-(5-phospho-beta-D-ribosyl)imidazole-4-carboxamido]succinate + ADP + phosphate + 2 H(+). The protein operates within purine metabolism; IMP biosynthesis via de novo pathway; 5-amino-1-(5-phospho-D-ribosyl)imidazole-4-carboxamide from 5-amino-1-(5-phospho-D-ribosyl)imidazole-4-carboxylate: step 1/2. In Psychrobacter cryohalolentis (strain ATCC BAA-1226 / DSM 17306 / VKM B-2378 / K5), this protein is Phosphoribosylaminoimidazole-succinocarboxamide synthase.